Reading from the N-terminus, the 239-residue chain is Orotidine 5'-phosphate decarboxylase (239 aa).

Residues Asp-10, Lys-33, 60 to 69 (DLKLYDIPNT), Thr-124, Arg-186, Gln-195, Gly-215, and Arg-216 contribute to the substrate site. The Proton donor role is filled by Lys-62.

The protein belongs to the OMP decarboxylase family. Type 1 subfamily. Homodimer.

The catalysed reaction is orotidine 5'-phosphate + H(+) = UMP + CO2. It participates in pyrimidine metabolism; UMP biosynthesis via de novo pathway; UMP from orotate: step 2/2. Its function is as follows. Catalyzes the decarboxylation of orotidine 5'-monophosphate (OMP) to uridine 5'-monophosphate (UMP). In Latilactobacillus sakei subsp. sakei (strain 23K) (Lactobacillus sakei subsp. sakei), this protein is Orotidine 5'-phosphate decarboxylase.